Here is a 217-residue protein sequence, read N- to C-terminus: Adenylate kinase (217 aa).

ATP is bound at residue 10-15 (GAGKGT). Residues 30-59 (STGDMFRAAMKEGTPLGLQAKQYMDRGDLV) are NMP. AMP is bound by residues Thr-31, Arg-36, 57–59 (DLV), 85–88 (GFPR), and Gln-92. Residues 126–163 (GRRICRNCGATYHLIFHPPAKPGVCDKCGGELYQRADD) form an LID region. Arg-127 is a binding site for ATP. Residues Cys-130 and Cys-133 each contribute to the Zn(2+) site. 136–137 (TY) lines the ATP pocket. Zn(2+)-binding residues include Cys-150 and Cys-153. 2 residues coordinate AMP: Arg-160 and Arg-171. Gln-199 is an ATP binding site.

Belongs to the adenylate kinase family. Monomer.

The protein resides in the cytoplasm. It catalyses the reaction AMP + ATP = 2 ADP. The protein operates within purine metabolism; AMP biosynthesis via salvage pathway; AMP from ADP: step 1/1. In terms of biological role, catalyzes the reversible transfer of the terminal phosphate group between ATP and AMP. Plays an important role in cellular energy homeostasis and in adenine nucleotide metabolism. This chain is Adenylate kinase, found in Geobacillus stearothermophilus (Bacillus stearothermophilus).